A 447-amino-acid chain; its full sequence is Argininosuccinate synthase (447 aa).

ATP is bound by residues 17–25 and A43; that span reads AFSGGLDTS. An L-citrulline-binding site is contributed by Y99. ATP is bound by residues G129 and T131. Residues T131, N135, and D136 each coordinate L-aspartate. N135 lines the L-citrulline pocket. ATP is bound at residue D136. L-citrulline-binding residues include R139 and S192. ATP is bound at residue D194. L-citrulline contacts are provided by T201, E203, and E280.

Belongs to the argininosuccinate synthase family. Type 2 subfamily. As to quaternary structure, homotetramer.

It is found in the cytoplasm. It catalyses the reaction L-citrulline + L-aspartate + ATP = 2-(N(omega)-L-arginino)succinate + AMP + diphosphate + H(+). It participates in amino-acid biosynthesis; L-arginine biosynthesis; L-arginine from L-ornithine and carbamoyl phosphate: step 2/3. The sequence is that of Argininosuccinate synthase from Shigella dysenteriae serotype 1 (strain Sd197).